A 283-amino-acid chain; its full sequence is MTVQTSKNPQVDIAEDNAFFPSEYSLSQYTSPVSDLDGVDYPKPYRGKHKILVIAADERYLPTDNGKLFSTGNHPIETLLPLYHLHAAGFEFEVATISGLMTKFEYWAMPHKDEKVMPFFEQHKSLFRNPKKLADVVASLNADSEYAAIFVPGGHGALIGLPESQDVAAALQWAIKNDRFVISLCHGPAAFLALRHGDNPLNGYSICAFPDAADKQTPEIGYMPGHLTWYFGEELKKMGMNIINDDITGRVHKDRKVLTGDSPFAANALGKLAAQEMLAAYAG.

Positions 86, 91, and 123 each coordinate Zn(2+). Cys-185 serves as the catalytic Nucleophile.

This sequence belongs to the peptidase C56 family. HchA subfamily. As to quaternary structure, homodimer.

It is found in the cytoplasm. The enzyme catalyses N(omega)-(1-hydroxy-2-oxopropyl)-L-arginyl-[protein] + H2O = lactate + L-arginyl-[protein] + H(+). The catalysed reaction is N(6)-(1-hydroxy-2-oxopropyl)-L-lysyl-[protein] + H2O = lactate + L-lysyl-[protein] + H(+). It carries out the reaction S-(1-hydroxy-2-oxopropyl)-L-cysteinyl-[protein] + H2O = lactate + L-cysteinyl-[protein] + H(+). It catalyses the reaction N(omega)-(1-hydroxy-2-oxoethyl)-L-arginyl-[protein] + H2O = L-arginyl-[protein] + glycolate + H(+). The enzyme catalyses N(6)-(1-hydroxy-2-oxoethyl)-L-lysyl-[protein] + H2O = glycolate + L-lysyl-[protein] + H(+). The catalysed reaction is S-(1-hydroxy-2-oxoethyl)-L-cysteinyl-[protein] + H2O = glycolate + L-cysteinyl-[protein] + H(+). It carries out the reaction N(2)-(1-hydroxy-2-oxopropyl)-dGTP + H2O = lactate + dGTP + H(+). It catalyses the reaction N(2)-(1-hydroxy-2-oxopropyl)-GTP + H2O = lactate + GTP + H(+). The enzyme catalyses N(2)-(1-hydroxy-2-oxopropyl)-GDP + H2O = lactate + GDP + H(+). The catalysed reaction is N(2)-(1-hydroxy-2-oxopropyl)-GMP + H2O = lactate + GMP + H(+). It carries out the reaction N(2)-(1-hydroxy-2-oxoethyl)-dGTP + H2O = dGTP + glycolate + H(+). It catalyses the reaction N(2)-(1-hydroxy-2-oxoethyl)-GTP + H2O = glycolate + GTP + H(+). The enzyme catalyses N(2)-(1-hydroxy-2-oxoethyl)-GDP + H2O = glycolate + GDP + H(+). The catalysed reaction is N(2)-(1-hydroxy-2-oxoethyl)-GMP + H2O = glycolate + GMP + H(+). It carries out the reaction an N(2)-(1-hydroxy-2-oxopropyl)-guanosine in RNA + H2O = a guanosine in RNA + lactate + H(+). It catalyses the reaction an N(2)-(1-hydroxy-2-oxopropyl)-2'-deoxyguanosine in DNA + H2O = a 2'-deoxyguanosine in DNA + lactate + H(+). The enzyme catalyses an N(2)-(1-hydroxy-2-oxoethyl)-guanosine in RNA + H2O = a guanosine in RNA + glycolate + H(+). The catalysed reaction is an N(2)-(1-hydroxy-2-oxoethyl)-2'-deoxyguanosine in DNA + H2O = a 2'-deoxyguanosine in DNA + glycolate + H(+). Its function is as follows. Protein and nucleotide deglycase that catalyzes the deglycation of the Maillard adducts formed between amino groups of proteins or nucleotides and reactive carbonyl groups of glyoxals. Thus, functions as a protein deglycase that repairs methylglyoxal- and glyoxal-glycated proteins, and releases repaired proteins and lactate or glycolate, respectively. Deglycates cysteine, arginine and lysine residues in proteins, and thus reactivates these proteins by reversing glycation by glyoxals. Acts on early glycation intermediates (hemithioacetals and aminocarbinols), preventing the formation of Schiff bases and advanced glycation endproducts (AGE). Also functions as a nucleotide deglycase able to repair glycated guanine in the free nucleotide pool (GTP, GDP, GMP, dGTP) and in DNA and RNA. Is thus involved in a major nucleotide repair system named guanine glycation repair (GG repair), dedicated to reversing methylglyoxal and glyoxal damage via nucleotide sanitization and direct nucleic acid repair. Plays an important role in protecting cells from carbonyl stress. The polypeptide is Protein/nucleic acid deglycase HchA (Escherichia coli O81 (strain ED1a)).